The primary structure comprises 428 residues: Adenylosuccinate synthetase (428 aa).

GTP-binding positions include 12–18 (GDEGKGK) and 40–42 (GHT). Asp13 functions as the Proton acceptor in the catalytic mechanism. 2 residues coordinate Mg(2+): Asp13 and Gly40. Residues 13 to 16 (DEGK), 38 to 41 (NAGH), Thr128, Arg142, Gln223, Thr238, and Arg302 contribute to the IMP site. His41 acts as the Proton donor in catalysis. Residue 298-304 (VTTGRPR) participates in substrate binding. GTP-binding positions include Arg304, 330–332 (KLD), and 412–414 (GTG).

Belongs to the adenylosuccinate synthetase family. As to quaternary structure, homodimer. It depends on Mg(2+) as a cofactor.

It is found in the cytoplasm. It carries out the reaction IMP + L-aspartate + GTP = N(6)-(1,2-dicarboxyethyl)-AMP + GDP + phosphate + 2 H(+). It functions in the pathway purine metabolism; AMP biosynthesis via de novo pathway; AMP from IMP: step 1/2. In terms of biological role, plays an important role in the de novo pathway of purine nucleotide biosynthesis. Catalyzes the first committed step in the biosynthesis of AMP from IMP. This Bifidobacterium adolescentis (strain ATCC 15703 / DSM 20083 / NCTC 11814 / E194a) protein is Adenylosuccinate synthetase.